A 71-amino-acid polypeptide reads, in one-letter code: UPF0435 protein RBAM_008100 (71 aa).

The protein belongs to the UPF0435 family.

In Bacillus velezensis (strain DSM 23117 / BGSC 10A6 / LMG 26770 / FZB42) (Bacillus amyloliquefaciens subsp. plantarum), this protein is UPF0435 protein RBAM_008100.